We begin with the raw amino-acid sequence, 84 residues long: Omega-conotoxin-like ArMKLT1-02 (84 aa).

An N-terminal signal peptide occupies residues 1–22 (MKVTCMMIVAVLFLTAWTFVTA). A propeptide spanning residues 23 to 51 (DDSISALEDLFAKAHDKMENSEASPLNER) is cleaved from the precursor. 3 disulfide bridges follow: C53–C71, C60–C75, and C70–C79.

The protein belongs to the conotoxin O1 superfamily. In terms of tissue distribution, expressed by the venom duct.

The protein localises to the secreted. Omega-conotoxins act at presynaptic membranes, they bind and block voltage-gated calcium channels (Cav). The protein is Omega-conotoxin-like ArMKLT1-02 of Conus arenatus (Sand-dusted cone).